Here is a 424-residue protein sequence, read N- to C-terminus: Translation initiation factor 2 subunit gamma (424 aa).

A tr-type G domain is found at 23–220 (LPEVNIGLVG…AIEETIPTPE (198 aa)). Residues 32-39 (GHVDHGKT) are G1. Mg(2+)-binding residues include Asp-35, Thr-39, Gly-60, and Ser-62. A GTP-binding site is contributed by 35 to 40 (DHGKTT). Positions 60–64 (GISIK) are G2. The interval 107-110 (DSPG) is G3. GTP-binding positions include 163-166 (NKID) and 198-200 (SAQ). A G4 region spans residues 163-166 (NKID). Positions 198 to 200 (SAQ) are G5.

This sequence belongs to the TRAFAC class translation factor GTPase superfamily. Classic translation factor GTPase family. EIF2G subfamily. In terms of assembly, heterotrimer composed of an alpha, a beta and a gamma chain. Mg(2+) is required as a cofactor.

It catalyses the reaction GTP + H2O = GDP + phosphate + H(+). Functionally, eIF-2 functions in the early steps of protein synthesis by forming a ternary complex with GTP and initiator tRNA. This Archaeoglobus fulgidus (strain ATCC 49558 / DSM 4304 / JCM 9628 / NBRC 100126 / VC-16) protein is Translation initiation factor 2 subunit gamma.